The chain runs to 1191 residues: Laminin subunit gamma-2 (1191 aa).

The signal sequence occupies residues 1–21 (MPALWLSCCLGVALLLPAAQA). 12 disulfides stabilise this stretch: C28/C37, C30/C53, C56/C65, C68/C81, C84/C96, C86/C102, C104/C113, C116/C128, C139/C150, C141/C155, C157/C166, and C169/C184. Laminin EGF-like domains are found at residues 28–83 (CDCN…RCLP), 84–130 (CNCH…GCTR), and 139–186 (CDCD…GCTQ). Residues 187–196 (CFCYGHSASC) form the Laminin EGF-like 4; first part domain. The Laminin IV type A domain occupies 213-381 (QDVDGWKAVQ…SGAPAPWVER (169 aa)). N342 and N362 each carry an N-linked (GlcNAc...) asparagine glycan. One can recognise a Laminin EGF-like 4; second part domain in the interval 382 to 415 (CVCPAGYKGQFCQECASGYKRDSARLGPFGACVP). 3 consecutive Laminin EGF-like domains span residues 416-461 (CNCQ…SCKP), 462-516 (CPCH…PCQR), and 517-572 (CQCN…KCRA). Disulfide bonds link C462–C470, C464–C481, C484–C493, C496–C514, C517–C531, C519–C538, C541–C550, C553–C570, C573–C585, C575–C591, and C593–C602. The N-linked (GlcNAc...) asparagine glycan is linked to N526. A Laminin EGF-like 8; truncated domain is found at 573–602 (CNCSPMGSEPGECRGDGSCVCKPGFGGLNC). The short motif at 586 to 588 (RGD) is the Cell attachment site element. The interval 603–1191 (DHAALTSCPA…CYNTQALEQQ (589 aa)) is domain II and I. 2 coiled-coil regions span residues 612-710 (ACYN…IRAL) and 759-786 (LAQE…ETED). S805 is a glycosylation site (O-linked (Xyl...) (chondroitin sulfate) serine). The N-linked (GlcNAc...) asparagine glycan is linked to N941. A coiled-coil region spans residues 946-996 (EVENILKNLREFDLQVEDRKAEAEEAMKRLSSISQKVADASDKTQQAETAL). A glycan (N-linked (GlcNAc...) asparagine) is linked at N1032. Residues 1139–1178 (LMSDLEERVRRQRNHLHLLETSIDGILADVKNLENIRDNL) are a coiled coil.

In terms of assembly, laminin is a complex glycoprotein, consisting of three different polypeptide chains (alpha, beta, gamma), which are bound to each other by disulfide bonds into a cross-shaped molecule comprising one long and three short arms with globules at each end. Gamma-2 is a subunit of laminin-5 (laminin-332 or epiligrin/kalinin/nicein). Binds to fibulin-1, fibulin-1c, fibulin-2 and nidogen. Post-translationally, O-glycosylated; contains chondroitin sulfate (CS). Epithelial cells of many tissues, particularly high levels in tongue, hair follicles and kidney. Basement membranes of the collecting tubules of kidney and pancreas.

Its subcellular location is the secreted. It is found in the extracellular space. The protein localises to the extracellular matrix. The protein resides in the basement membrane. Its function is as follows. Binding to cells via a high affinity receptor, laminin is thought to mediate the attachment, migration and organization of cells into tissues during embryonic development by interacting with other extracellular matrix components. This chain is Laminin subunit gamma-2 (Lamc2), found in Mus musculus (Mouse).